Here is a 115-residue protein sequence, read N- to C-terminus: Hydrogenase maturation factor HypA (115 aa).

His-2 contacts Ni(2+). Residues Cys-73, Cys-76, Cys-89, and Cys-92 each coordinate Zn(2+).

It belongs to the HypA/HybF family.

In terms of biological role, involved in the maturation of [NiFe] hydrogenases. Required for nickel insertion into the metal center of the hydrogenase. The chain is Hydrogenase maturation factor HypA from Polaromonas naphthalenivorans (strain CJ2).